The sequence spans 942 residues: Protein inturned (942 aa).

The disordered stretch occupies residues 1–52; it reads MASVASCDSRPSSDELPGDPSSQEEDEDYDFEDRVSDSGSYSSASSDYDDLE. Positions 22–31 are enriched in acidic residues; the sequence is SQEEDEDYDF. Positions 37 to 46 are enriched in low complexity; that stretch reads DSGSYSSASS. The PDZ domain maps to 185–263; sequence LVGIIHQTKW…PMQVKLTFEN (79 aa). Serine 670 and serine 674 each carry phosphoserine. The tract at residues 704-754 is disordered; that stretch reads TRKPSPSCSSGGSDNGCEGGEDDGFSPHTTPDAVRKQRESQGSDGLEESGT.

It belongs to the inturned family. As to quaternary structure, component of the CPLANE (ciliogenesis and planar polarity effectors) complex, composed of INTU, FUZ and WDPCP. Interacts with CPLANE1. Interacts with NPHP4 and DAAM1; INTU is mediating the interaction between NPHP4 and DAAM1.

Its subcellular location is the cytoplasm. It localises to the cell surface. It is found in the cytoskeleton. The protein resides in the cilium basal body. The protein localises to the microtubule organizing center. Its subcellular location is the centrosome. It localises to the centriole. Its function is as follows. Plays a key role in ciliogenesis and embryonic development. Regulator of cilia formation by controlling the organization of the apical actin cytoskeleton and the positioning of the basal bodies at the apical cell surface, which in turn is essential for the normal orientation of elongating ciliary microtubules. Plays a key role in definition of cell polarity via its role in ciliogenesis but not via conversion extension. Has an indirect effect on hedgehog signaling. Proposed to function as core component of the CPLANE (ciliogenesis and planar polarity effectors) complex involved in the recruitment of peripheral IFT-A proteins to basal bodies. Required for recruitment of CPLANE2 to the mother centriole. Binds phosphatidylinositol 3-phosphate with highest affinity, followed by phosphatidylinositol 4-phosphate and phosphatidylinositol 5-phosphate. This Homo sapiens (Human) protein is Protein inturned (INTU).